The primary structure comprises 285 residues: 2-dehydro-3-deoxyphosphooctonate aldolase (285 aa).

It belongs to the KdsA family.

Its subcellular location is the cytoplasm. It carries out the reaction D-arabinose 5-phosphate + phosphoenolpyruvate + H2O = 3-deoxy-alpha-D-manno-2-octulosonate-8-phosphate + phosphate. The protein operates within carbohydrate biosynthesis; 3-deoxy-D-manno-octulosonate biosynthesis; 3-deoxy-D-manno-octulosonate from D-ribulose 5-phosphate: step 2/3. It functions in the pathway bacterial outer membrane biogenesis; lipopolysaccharide biosynthesis. The chain is 2-dehydro-3-deoxyphosphooctonate aldolase from Methylibium petroleiphilum (strain ATCC BAA-1232 / LMG 22953 / PM1).